The following is an 835-amino-acid chain: Protein bicaudal D homolog 1 (835 aa).

The stretch at 1-264 (MAAEEALKTV…YINLSDSHIS (264 aa)) forms a coiled coil. The interval 278–297 (EPNNDDKMNGHIHGPLGKLN) is disordered. Positions 320–519 (ELNISEIQKL…TFSEELAQLY (200 aa)) form a coiled coil. Disordered stretches follow at residues 545–616 (RSGS…LDTS) and 800–835 (DHEQ…SAHN). Residues 557 to 572 (GLLSPRLSRRGVSSPV) show a composition bias toward low complexity. Over residues 581–590 (VSKENTETSK) the composition is skewed to basic and acidic residues. Residues 591-604 (EPSPTKTPTISPVI) show a composition bias toward low complexity. Positions 663-803 (IDKDKEALME…LEDLEFDHEQ (141 aa)) form a coiled coil. Positions 663-803 (IDKDKEALME…LEDLEFDHEQ (141 aa)) are interaction with RAB6A.

Belongs to the BicD family. In terms of assembly, interacts with RAB6A. Interacts (via C-terminus) with RAB6B (GTP-bound); the interaction is direct. Interacts with CLIP-115 and KIFC2. Expressed in the brain, heart and skeletal muscle.

It is found in the golgi apparatus. Its function is as follows. Regulates coat complex coatomer protein I (COPI)-independent Golgi-endoplasmic reticulum transport by recruiting the dynein-dynactin motor complex. This Mus musculus (Mouse) protein is Protein bicaudal D homolog 1 (Bicd1).